Reading from the N-terminus, the 91-residue chain is Large ribosomal subunit protein uL23 (91 aa).

The protein belongs to the universal ribosomal protein uL23 family. Part of the 50S ribosomal subunit. Contacts protein L29, and trigger factor when it is bound to the ribosome.

One of the early assembly proteins it binds 23S rRNA. One of the proteins that surrounds the polypeptide exit tunnel on the outside of the ribosome. Forms the main docking site for trigger factor binding to the ribosome. The chain is Large ribosomal subunit protein uL23 from Macrococcus caseolyticus (strain JCSC5402) (Macrococcoides caseolyticum).